Consider the following 72-residue polypeptide: Translation initiation factor IF-1 (72 aa).

The region spanning 1–72 (MSKEDSFEME…SKGRITYRAR (72 aa)) is the S1-like domain.

The protein belongs to the IF-1 family. In terms of assembly, component of the 30S ribosomal translation pre-initiation complex which assembles on the 30S ribosome in the order IF-2 and IF-3, IF-1 and N-formylmethionyl-tRNA(fMet); mRNA recruitment can occur at any time during PIC assembly.

The protein resides in the cytoplasm. Its function is as follows. One of the essential components for the initiation of protein synthesis. Stabilizes the binding of IF-2 and IF-3 on the 30S subunit to which N-formylmethionyl-tRNA(fMet) subsequently binds. Helps modulate mRNA selection, yielding the 30S pre-initiation complex (PIC). Upon addition of the 50S ribosomal subunit IF-1, IF-2 and IF-3 are released leaving the mature 70S translation initiation complex. The chain is Translation initiation factor IF-1 from Pseudomonas savastanoi pv. phaseolicola (strain 1448A / Race 6) (Pseudomonas syringae pv. phaseolicola (strain 1448A / Race 6)).